A 276-amino-acid polypeptide reads, in one-letter code: Diaminopimelate epimerase (276 aa).

Residues Asn-13, Gln-46, and Asn-66 each coordinate substrate. The Proton donor role is filled by Cys-75. Substrate contacts are provided by residues 76-77 (GN), Asn-159, Asn-192, and 210-211 (ER). The Proton acceptor role is filled by Cys-219. Position 220 to 221 (220 to 221 (GS)) interacts with substrate.

It belongs to the diaminopimelate epimerase family. As to quaternary structure, homodimer.

Its subcellular location is the cytoplasm. It catalyses the reaction (2S,6S)-2,6-diaminopimelate = meso-2,6-diaminopimelate. It functions in the pathway amino-acid biosynthesis; L-lysine biosynthesis via DAP pathway; DL-2,6-diaminopimelate from LL-2,6-diaminopimelate: step 1/1. Its function is as follows. Catalyzes the stereoinversion of LL-2,6-diaminopimelate (L,L-DAP) to meso-diaminopimelate (meso-DAP), a precursor of L-lysine and an essential component of the bacterial peptidoglycan. In Aliivibrio fischeri (strain ATCC 700601 / ES114) (Vibrio fischeri), this protein is Diaminopimelate epimerase.